We begin with the raw amino-acid sequence, 170 residues long: MSKAAIAEKEKFVDAFAEELKAAKAILVINYLGLTVEEVTNMRKELRDNDVKMKVIKNTYLRRAAAKAGIEGLDDTFVGPTAVIYTDNADDITEPARIVSKYEDDFDVIEIKGGMLEGKLTSKDEIKELASIPGREGVLSMLVSVLQAPIRDFAYAVKAVAESKDEDSAE.

The protein belongs to the universal ribosomal protein uL10 family. As to quaternary structure, part of the ribosomal stalk of the 50S ribosomal subunit. The N-terminus interacts with L11 and the large rRNA to form the base of the stalk. The C-terminus forms an elongated spine to which L12 dimers bind in a sequential fashion forming a multimeric L10(L12)X complex.

Forms part of the ribosomal stalk, playing a central role in the interaction of the ribosome with GTP-bound translation factors. The protein is Large ribosomal subunit protein uL10 of Lactobacillus helveticus (strain DPC 4571).